Here is a 317-residue protein sequence, read N- to C-terminus: Glucokinase (317 aa).

It belongs to the ROK (NagC/XylR) family. As to quaternary structure, homodimer. Requires a divalent metal cation as cofactor.

The catalysed reaction is D-glucose + ATP = D-glucose 6-phosphate + ADP + H(+). Catalyzes the phosphorylation of D-glucose to D-glucose 6-phosphate using ATP as the phosphate donor. Can also phosphorylate 2-deoxyglucose, with lower efficiency. ITP can also serve as a phosphoryl donor. The protein is Glucokinase of Thermotoga maritima (strain ATCC 43589 / DSM 3109 / JCM 10099 / NBRC 100826 / MSB8).